We begin with the raw amino-acid sequence, 380 residues long: MSKAGSDASSISCSLSLDSDSCDDEFYETNLNKLIENTSLNWIFVGGKGGVGKTTTSCSIAIQLAKKRESVLLLSTDPAHNTSDAFNQKFTNKPTLINSFDNLYCMEIDTTFSEDTAFKINKSDFLNSIIPELLQSFPGIDEALCFAELMQSIRNMKYSVIVFDTAPTGHTLRLLAFPDLLKKALGYLINLKEKLKGTLNMLQSLTSNEMEFEGMYDKINHLNTMSISIQENFQNPLKTTFVCVCIPEFLSVYETERLIQELTKKNISCYNIVVNQVVFPLTSQDANIESCEGLLKQIKDTNIKDSFSSLILKAKELEDVYISRRKLQSKYLTQIKNLYGNYFHIVCMPQLKSEIRGLDKIASFSEMLLQSKDIPIYSPQ.

48–55 (KGGVGKTT) serves as a coordination point for ATP. Aspartate 77 is a catalytic residue. ATP contacts are provided by glutamate 248 and asparagine 275.

Belongs to the arsA ATPase family. Homodimer.

The protein localises to the cytoplasm. It is found in the endoplasmic reticulum. Functionally, ATPase required for the post-translational delivery of tail-anchored (TA) proteins to the endoplasmic reticulum. Recognizes and selectively binds the transmembrane domain of TA proteins in the cytosol. This complex then targets to the endoplasmic reticulum by membrane-bound receptors, where the tail-anchored protein is released for insertion. This process is regulated by ATP binding and hydrolysis. ATP binding drives the homodimer towards the closed dimer state, facilitating recognition of newly synthesized TA membrane proteins. ATP hydrolysis is required for insertion. Subsequently, the homodimer reverts towards the open dimer state, lowering its affinity for the membrane-bound receptor, and returning it to the cytosol to initiate a new round of targeting. This Plasmodium chabaudi chabaudi protein is ATPase ASNA1 homolog.